Reading from the N-terminus, the 389-residue chain is 26S proteasome regulatory subunit 6B homolog (389 aa).

175–182 (GPPGTGKT) contacts ATP.

It belongs to the AAA ATPase family.

The protein localises to the cytoplasm. Its subcellular location is the nucleus. Its function is as follows. The 26S proteasome is involved in the ATP-dependent degradation of ubiquitinated proteins. The regulatory (or ATPase) complex confers ATP dependency and substrate specificity to the 26S complex. This chain is 26S proteasome regulatory subunit 6B homolog (rpt3), found in Schizosaccharomyces pombe (strain 972 / ATCC 24843) (Fission yeast).